The chain runs to 381 residues: Succinyl-diaminopimelate desuccinylase (381 aa).

Residue His-68 participates in Zn(2+) binding. The active site involves Asp-70. Residue Asp-101 coordinates Zn(2+). Catalysis depends on Glu-135, which acts as the Proton acceptor. 3 residues coordinate Zn(2+): Glu-136, Glu-164, and His-350.

Belongs to the peptidase M20A family. DapE subfamily. Homodimer. Zn(2+) serves as cofactor. It depends on Co(2+) as a cofactor.

The enzyme catalyses N-succinyl-(2S,6S)-2,6-diaminopimelate + H2O = (2S,6S)-2,6-diaminopimelate + succinate. It functions in the pathway amino-acid biosynthesis; L-lysine biosynthesis via DAP pathway; LL-2,6-diaminopimelate from (S)-tetrahydrodipicolinate (succinylase route): step 3/3. In terms of biological role, catalyzes the hydrolysis of N-succinyl-L,L-diaminopimelic acid (SDAP), forming succinate and LL-2,6-diaminopimelate (DAP), an intermediate involved in the bacterial biosynthesis of lysine and meso-diaminopimelic acid, an essential component of bacterial cell walls. This Neisseria meningitidis serogroup C (strain 053442) protein is Succinyl-diaminopimelate desuccinylase.